The sequence spans 70 residues: Putative membrane protein insertion efficiency factor (70 aa).

This sequence belongs to the UPF0161 family.

It is found in the cell inner membrane. Functionally, could be involved in insertion of integral membrane proteins into the membrane. This Francisella tularensis subsp. tularensis (strain SCHU S4 / Schu 4) protein is Putative membrane protein insertion efficiency factor.